Reading from the N-terminus, the 30-residue chain is Rothein 3.3 (30 aa).

Leu30 carries the post-translational modification Leucine amide.

As to expression, expressed by the skin dorsal glands.

The protein resides in the secreted. Lacks antimicrobial activity. Does not inhibit the formation of NO by neuronal nitric oxide. This chain is Rothein 3.3, found in Litoria rothii (Roth's tree frog).